A 430-amino-acid chain; its full sequence is tRNA(Ile)-lysidine synthase (430 aa).

24-29 (SGGLDS) serves as a coordination point for ATP.

The protein belongs to the tRNA(Ile)-lysidine synthase family.

Its subcellular location is the cytoplasm. It carries out the reaction cytidine(34) in tRNA(Ile2) + L-lysine + ATP = lysidine(34) in tRNA(Ile2) + AMP + diphosphate + H(+). Functionally, ligates lysine onto the cytidine present at position 34 of the AUA codon-specific tRNA(Ile) that contains the anticodon CAU, in an ATP-dependent manner. Cytidine is converted to lysidine, thus changing the amino acid specificity of the tRNA from methionine to isoleucine. This chain is tRNA(Ile)-lysidine synthase, found in Haemophilus influenzae (strain PittGG).